The chain runs to 147 residues: uncharacterized protein (147 aa).

2 disordered regions span residues 1-49 (MRTP…NLNE) and 125-147 (SPSP…RKSN). 2 stretches are compositionally biased toward low complexity: residues 8-49 (NNNY…NLNE) and 125-140 (SPSP…PQNT).

This is an uncharacterized protein from Dictyostelium discoideum (Social amoeba).